The chain runs to 99 residues: Nucleoid-associated protein UPA3_0088 (99 aa).

The protein belongs to the YbaB/EbfC family. In terms of assembly, homodimer.

Its subcellular location is the cytoplasm. The protein localises to the nucleoid. In terms of biological role, binds to DNA and alters its conformation. May be involved in regulation of gene expression, nucleoid organization and DNA protection. This Ureaplasma parvum serovar 3 (strain ATCC 27815 / 27 / NCTC 11736) protein is Nucleoid-associated protein UPA3_0088.